A 469-amino-acid polypeptide reads, in one-letter code: Sulfate adenylyltransferase subunit 1 (469 aa).

In terms of domain architecture, tr-type G spans 22 to 237 (KEVLRFITCG…LEEVPVKSEE (216 aa)). The interval 31 to 38 (GSVDDGKS) is G1. 31 to 38 (GSVDDGKS) is a binding site for GTP. The G2 stretch occupies residues 89–93 (GITID). The G3 stretch occupies residues 110–113 (DTPG). GTP-binding positions include 110 to 114 (DTPGH) and 165 to 168 (NKMD). The segment at 165-168 (NKMD) is G4. A G5 region spans residues 202–204 (SAK).

It belongs to the TRAFAC class translation factor GTPase superfamily. Classic translation factor GTPase family. CysN/NodQ subfamily. As to quaternary structure, heterodimer composed of CysD, the smaller subunit, and CysN.

The catalysed reaction is sulfate + ATP + H(+) = adenosine 5'-phosphosulfate + diphosphate. It participates in sulfur metabolism; hydrogen sulfide biosynthesis; sulfite from sulfate: step 1/3. Functionally, with CysD forms the ATP sulfurylase (ATPS) that catalyzes the adenylation of sulfate producing adenosine 5'-phosphosulfate (APS) and diphosphate, the first enzymatic step in sulfur assimilation pathway. APS synthesis involves the formation of a high-energy phosphoric-sulfuric acid anhydride bond driven by GTP hydrolysis by CysN coupled to ATP hydrolysis by CysD. This chain is Sulfate adenylyltransferase subunit 1, found in Methylorubrum extorquens (strain PA1) (Methylobacterium extorquens).